The chain runs to 310 residues: Homoserine kinase (310 aa).

91 to 101 (PIGSGLGSSAC) lines the ATP pocket.

Belongs to the GHMP kinase family. Homoserine kinase subfamily.

It is found in the cytoplasm. It carries out the reaction L-homoserine + ATP = O-phospho-L-homoserine + ADP + H(+). Its pathway is amino-acid biosynthesis; L-threonine biosynthesis; L-threonine from L-aspartate: step 4/5. Functionally, catalyzes the ATP-dependent phosphorylation of L-homoserine to L-homoserine phosphate. This Escherichia coli (strain SE11) protein is Homoserine kinase.